The following is a 157-amino-acid chain: Nascent polypeptide-associated complex subunit beta-1 (157 aa).

2 disordered regions span residues 19–42 and 126–157; these read KVGG…KDDT and EKHE…ADVE. Residues 38–103 enclose the NAC-A/B domain; the sequence is NKDDTKLQSQ…PQEKNLQDLF (66 aa). The segment covering 126 to 142 has biased composition (basic and acidic residues); it reads EKHEAKAPADAEKKDEA. Thr-151 carries the post-translational modification Phosphothreonine.

This sequence belongs to the NAC-beta family. As to quaternary structure, part of the nascent polypeptide-associated complex (NAC), consisting of EGD2 and either EGD1 or BTT1. NAC associates with ribosomes via EGD1 or BTT1, and with the CCR4-NOT complex.

Its subcellular location is the cytoplasm. The protein resides in the nucleus. Component of the nascent polypeptide-associated complex (NAC), a dynamic component of the ribosomal exit tunnel, protecting the emerging polypeptides from interaction with other cytoplasmic proteins to ensure appropriate nascent protein targeting. The NAC complex also promotes mitochondrial protein import by enhancing productive ribosome interactions with the outer mitochondrial membrane and blocks the inappropriate interaction of ribosomes translating non-secretory nascent polypeptides with translocation sites in the membrane of the endoplasmic reticulum. EGD1 may act as a transcription factor that exert a negative effect on the expression of several genes that are transcribed by RNA polymerase II. The polypeptide is Nascent polypeptide-associated complex subunit beta-1 (EGD1) (Saccharomyces cerevisiae (strain YJM789) (Baker's yeast)).